The chain runs to 154 residues: SsrA-binding protein (154 aa).

The protein belongs to the SmpB family.

The protein localises to the cytoplasm. Its function is as follows. Required for rescue of stalled ribosomes mediated by trans-translation. Binds to transfer-messenger RNA (tmRNA), required for stable association of tmRNA with ribosomes. tmRNA and SmpB together mimic tRNA shape, replacing the anticodon stem-loop with SmpB. tmRNA is encoded by the ssrA gene; the 2 termini fold to resemble tRNA(Ala) and it encodes a 'tag peptide', a short internal open reading frame. During trans-translation Ala-aminoacylated tmRNA acts like a tRNA, entering the A-site of stalled ribosomes, displacing the stalled mRNA. The ribosome then switches to translate the ORF on the tmRNA; the nascent peptide is terminated with the 'tag peptide' encoded by the tmRNA and targeted for degradation. The ribosome is freed to recommence translation, which seems to be the essential function of trans-translation. The chain is SsrA-binding protein from Ruminiclostridium cellulolyticum (strain ATCC 35319 / DSM 5812 / JCM 6584 / H10) (Clostridium cellulolyticum).